Consider the following 437-residue polypeptide: Ribosomal protein uS12 methylthiotransferase RimO (437 aa).

Residues 4-114 (PRVSFVSLGC…VMNAVHEVAP (111 aa)) form the MTTase N-terminal domain. [4Fe-4S] cluster contacts are provided by cysteine 13, cysteine 49, cysteine 78, cysteine 145, cysteine 149, and cysteine 152. The Radical SAM core domain occupies 131 to 369 (LTPRHYAYLK…MAKQQQISTN (239 aa)). Residues 372-437 (KKKVGKRLPV…DAYDLHGTAV (66 aa)) enclose the TRAM domain.

Belongs to the methylthiotransferase family. RimO subfamily. It depends on [4Fe-4S] cluster as a cofactor.

The protein localises to the cytoplasm. It carries out the reaction L-aspartate(89)-[ribosomal protein uS12]-hydrogen + (sulfur carrier)-SH + AH2 + 2 S-adenosyl-L-methionine = 3-methylsulfanyl-L-aspartate(89)-[ribosomal protein uS12]-hydrogen + (sulfur carrier)-H + 5'-deoxyadenosine + L-methionine + A + S-adenosyl-L-homocysteine + 2 H(+). Catalyzes the methylthiolation of an aspartic acid residue of ribosomal protein uS12. The polypeptide is Ribosomal protein uS12 methylthiotransferase RimO (Brucella abortus (strain S19)).